We begin with the raw amino-acid sequence, 655 residues long: Very long-chain specific acyl-CoA dehydrogenase, mitochondrial (655 aa).

Residues 1–40 (MQAARMAASLGRQLLRLGGGSSRLTALLGQPRPGPARRPY) constitute a mitochondrion transit peptide. Residues 23 to 42 (RLTALLGQPRPGPARRPYAG) form a disordered region. The catalytic stretch occupies residues 41 to 482 (AGGAAQLALD…ALQGCMDKGK (442 aa)). The residue at position 51 (Lys-51) is an N6-acetyllysine. Lys-71 is subject to N6-acetyllysine; alternate. Lys-71 carries the N6-succinyllysine; alternate modification. Lys-195 carries the post-translational modification N6-succinyllysine. 214–223 (FCLTEPSSGS) lines the FAD pocket. At Cys-237 the chain carries S-nitrosocysteine. N6-acetyllysine; alternate is present on Lys-239. Position 239 is an N6-succinyllysine; alternate (Lys-239). 249-251 (WIS) is an FAD binding site. Residues Lys-276 and Lys-278 each carry the N6-acetyllysine; alternate modification. 2 positions are modified to N6-succinyllysine; alternate: Lys-276 and Lys-278. An N6-acetyllysine modification is found at Lys-298. N6-acetyllysine; alternate is present on Lys-331. Residue Lys-331 is modified to N6-succinyllysine; alternate. Position 372 is an N6-succinyllysine (Lys-372). Residue 461–463 (FEG) coordinates substrate. Residue Glu-462 is the Proton acceptor of the active site. Position 464 to 466 (464 to 466 (TND)) interacts with FAD. Lys-482 carries the N6-acetyllysine; alternate modification. An N6-succinyllysine; alternate modification is found at Lys-482. The interval 483-516 (ELSGLGSALKNPFGNAGLLLGEAGKQLRRRAGLG) is membrane-anchoring. 2 positions are modified to phosphoserine: Ser-517 and Ser-522. Lys-550 carries the post-translational modification N6-acetyllysine. Lys-556 is modified (N6-acetyllysine; alternate). The residue at position 556 (Lys-556) is an N6-succinyllysine; alternate. Gln-562 lines the FAD pocket. Lys-639 carries the post-translational modification N6-succinyllysine.

Belongs to the acyl-CoA dehydrogenase family. In terms of assembly, homodimer. Homodimerizes after import into the mitochondrion. FAD serves as cofactor. Post-translationally, S-nitrosylation at Cys-237 in liver improves catalytic efficiency. Predominantly expressed in heart and skeletal muscle (at protein level). Also detected in kidney and liver (at protein level).

Its subcellular location is the mitochondrion inner membrane. The catalysed reaction is a very-long-chain 2,3-saturated fatty acyl-CoA + oxidized [electron-transfer flavoprotein] + H(+) = a very-long-chain (2E)-enoyl-CoA + reduced [electron-transfer flavoprotein]. The enzyme catalyses decanoyl-CoA + oxidized [electron-transfer flavoprotein] + H(+) = (2E)-decenoyl-CoA + reduced [electron-transfer flavoprotein]. It carries out the reaction dodecanoyl-CoA + oxidized [electron-transfer flavoprotein] + H(+) = (2E)-dodecenoyl-CoA + reduced [electron-transfer flavoprotein]. It catalyses the reaction tetradecanoyl-CoA + oxidized [electron-transfer flavoprotein] + H(+) = (2E)-tetradecenoyl-CoA + reduced [electron-transfer flavoprotein]. The catalysed reaction is oxidized [electron-transfer flavoprotein] + hexadecanoyl-CoA + H(+) = (2E)-hexadecenoyl-CoA + reduced [electron-transfer flavoprotein]. The enzyme catalyses octadecanoyl-CoA + oxidized [electron-transfer flavoprotein] + H(+) = (2E)-octadecenoyl-CoA + reduced [electron-transfer flavoprotein]. It carries out the reaction eicosanoyl-CoA + oxidized [electron-transfer flavoprotein] + H(+) = (2E)-eicosenoyl-CoA + reduced [electron-transfer flavoprotein]. It catalyses the reaction docosanoyl-CoA + oxidized [electron-transfer flavoprotein] + H(+) = (2E)-docosenoyl-CoA + reduced [electron-transfer flavoprotein]. The catalysed reaction is tetracosanoyl-CoA + oxidized [electron-transfer flavoprotein] + H(+) = (2E)-tetracosenoyl-CoA + reduced [electron-transfer flavoprotein]. The enzyme catalyses (9Z)-hexadecenoyl-CoA + oxidized [electron-transfer flavoprotein] + H(+) = (2E,9Z)-hexadecadienoyl-CoA + reduced [electron-transfer flavoprotein]. It carries out the reaction oxidized [electron-transfer flavoprotein] + (9Z)-octadecenoyl-CoA + H(+) = (2E,9Z)-octadecadienoyl-CoA + reduced [electron-transfer flavoprotein]. It functions in the pathway lipid metabolism; mitochondrial fatty acid beta-oxidation. In terms of biological role, very long-chain specific acyl-CoA dehydrogenase is one of the acyl-CoA dehydrogenases that catalyze the first step of mitochondrial fatty acid beta-oxidation, an aerobic process breaking down fatty acids into acetyl-CoA and allowing the production of energy from fats. The first step of fatty acid beta-oxidation consists in the removal of one hydrogen from C-2 and C-3 of the straight-chain fatty acyl-CoA thioester, resulting in the formation of trans-2-enoyl-CoA. Among the different mitochondrial acyl-CoA dehydrogenases, very long-chain specific acyl-CoA dehydrogenase acts specifically on acyl-CoAs with saturated 12 to 24 carbons long primary chains. The protein is Very long-chain specific acyl-CoA dehydrogenase, mitochondrial of Homo sapiens (Human).